The primary structure comprises 603 residues: Sorting nexin-41 (603 aa).

The disordered stretch occupies residues 1-36; that stretch reads MNSFRESDEEDNNPFSGTNHLYASGIGAVPEGDDDF. The PX domain maps to 121–241; it reads AEGSLGALRI…QKFLNPEYIW (121 aa). Residues R159, S161, K185, and R208 each contribute to the a 1,2-diacyl-sn-glycero-3-phospho-(1D-myo-inositol-3-phosphate) site.

The protein belongs to the sorting nexin family.

It localises to the endosome membrane. Its subcellular location is the endomembrane system. Functionally, may be required for cytoplasm to vacuole transport (Cvt) and pexophagy. The polypeptide is Sorting nexin-41 (SNX41) (Eremothecium gossypii (strain ATCC 10895 / CBS 109.51 / FGSC 9923 / NRRL Y-1056) (Yeast)).